The following is a 471-amino-acid chain: Vanillate/3-O-methylgallate O-demethylase (471 aa).

Tyrosine 31 contributes to the substrate binding site. A (6S)-5,6,7,8-tetrahydrofolate-binding site is contributed by glutamine 57. Histidine 60 serves as a coordination point for substrate. (6S)-5,6,7,8-tetrahydrofolate-binding residues include glutamine 93 and valine 120. Residue arginine 122 participates in substrate binding. Residues glutamine 165 and glutamate 215 each contribute to the (6S)-5,6,7,8-tetrahydrofolate site. 247–250 (YPSN) is a substrate binding site. Tryptophan 256 provides a ligand contact to (6S)-5,6,7,8-tetrahydrofolate.

Belongs to the GcvT family. Homodimer.

The enzyme catalyses vanillate + (6S)-5,6,7,8-tetrahydrofolate = (6S)-5-methyl-5,6,7,8-tetrahydrofolate + 3,4-dihydroxybenzoate. It catalyses the reaction 3-O-methylgallate + (6S)-5,6,7,8-tetrahydrofolate = 3,4,5-trihydroxybenzoate + (6S)-5-methyl-5,6,7,8-tetrahydrofolate. The protein operates within secondary metabolite metabolism; lignin degradation. In terms of biological role, involved in the catabolism of vanillate and syringate. Catalyzes the transfer of a methyl moiety from vanillate or 3-O-methylgallate (3MGA) to tetrahydrofolate, forming protocatechuate (PCA) or gallate, respectively, and methyl-tetrahydrofolate. Has similar activities with both substrates. Cannot use syringate. Uses an ordered, sequential kinetic mechanism. In Sphingobium sp. (strain NBRC 103272 / SYK-6), this protein is Vanillate/3-O-methylgallate O-demethylase.